A 382-amino-acid polypeptide reads, in one-letter code: UDP-N-acetylglucosamine--N-acetylmuramyl-(pentapeptide) pyrophosphoryl-undecaprenol N-acetylglucosamine transferase (382 aa).

Residues 17 to 19 (TAG), asparagine 137, arginine 179, serine 213, and glutamine 308 contribute to the UDP-N-acetyl-alpha-D-glucosamine site.

The protein belongs to the glycosyltransferase 28 family. MurG subfamily.

The protein localises to the cell membrane. It catalyses the reaction di-trans,octa-cis-undecaprenyl diphospho-N-acetyl-alpha-D-muramoyl-L-alanyl-D-glutamyl-meso-2,6-diaminopimeloyl-D-alanyl-D-alanine + UDP-N-acetyl-alpha-D-glucosamine = di-trans,octa-cis-undecaprenyl diphospho-[N-acetyl-alpha-D-glucosaminyl-(1-&gt;4)]-N-acetyl-alpha-D-muramoyl-L-alanyl-D-glutamyl-meso-2,6-diaminopimeloyl-D-alanyl-D-alanine + UDP + H(+). Its pathway is cell wall biogenesis; peptidoglycan biosynthesis. Cell wall formation. Catalyzes the transfer of a GlcNAc subunit on undecaprenyl-pyrophosphoryl-MurNAc-pentapeptide (lipid intermediate I) to form undecaprenyl-pyrophosphoryl-MurNAc-(pentapeptide)GlcNAc (lipid intermediate II). The protein is UDP-N-acetylglucosamine--N-acetylmuramyl-(pentapeptide) pyrophosphoryl-undecaprenol N-acetylglucosamine transferase of Rhodococcus opacus (strain B4).